A 432-amino-acid chain; its full sequence is Teosinte glume architecture 1 (432 aa).

2 disordered regions span residues 20–55 and 68–102; these read HAAA…GAPA and ECEP…QQQC. The span at 22–41 shows a compositional bias: low complexity; the sequence is AAAPSSGGHAANAAAAGTGT. An SBP-type zinc finger spans residues 102-179; the sequence is CPSCAVDGCR…DGHNRRRRKP (78 aa). Residues Cys-105, Cys-110, Cys-127, His-130, Cys-146, Cys-149, His-153, and Cys-165 each coordinate Zn(2+). A compositionally biased stretch (gly residues) spans 409–420; the sequence is GGGSGGGEGSSD. Residues 409 to 432 form a disordered region; sequence GGGSGGGEGSSDGGTSSSMPFSWQ.

Monomer and homodimer. Strongly expressed in immature ears and weakly in husks. Found in the inflorescence meristem of the developing ear, in the spikelet pair primordia, the glume primordia, the cupule forming region and other floral organs. Not detected in other tissues.

Functionally, SBP transcriptional regulator probably involved in the domestication of maize. Acts as a transcriptional repressor binding to a 5'-GTAC-3' motif. May repress the growth of lateral branches in length and numbers. The chain is Teosinte glume architecture 1 from Zea mays (Maize).